Here is a 571-residue protein sequence, read N- to C-terminus: MEKFLLTAPDGPPSDVERIKQESNYLRGTLKETMEDRITAGIPEDDNRLMKFHGSYLQDDRDLRAERQKQKLEPAYQFMIRVRTPGGVATPEQWLAMDELARKYANGTLKLTTRQAFQFHGVLKWNMKKTLQAINDALLTTLAACGDVNRNVMCNPNPYQSEVHAEVYEWAKRLSDHLLPQTRAYYEIWLDEEKVADTPDVEQEPIYGALYLPRKFKIGIAVPPSNDVDVFSQDLGFIAIVEHGKLAGFNVAIGGGMGMTHGDRTTYPQLAKVIGFCKPEQVIDVAEKVVTIQRDYGNRSVRKHARFKYTIDRLGLDAIKAELERRLGWELEEARPYRFEHNGDRYGWVEGVNGTWHFTLFIEGGRVKDTDDYPLMTGLREIAKVHTGDFRLTANQNLVIANVPSEKKEEMDALIQQYKLTDGKHYSALRRNSLACVALPTCGLAMAEAERYLPTLIDKIEEIVEENGLRDEEITIRMTGCPNGCARHVLGEIAFIGKSVGKYNMYLGAAFDGSRLGKLYRENIGEKEILSELRMLLSRYAKERFDGERFGDFVIRAGIVKEVTDGTNFHD.

[4Fe-4S] cluster-binding residues include C436, C442, C481, and C485. Siroheme is bound at residue C485.

Belongs to the nitrite and sulfite reductase 4Fe-4S domain family. In terms of assembly, alpha(8)-beta(8). The alpha component is a flavoprotein, the beta component is a hemoprotein. Requires siroheme as cofactor. [4Fe-4S] cluster serves as cofactor.

It catalyses the reaction hydrogen sulfide + 3 NADP(+) + 3 H2O = sulfite + 3 NADPH + 4 H(+). Its pathway is sulfur metabolism; hydrogen sulfide biosynthesis; hydrogen sulfide from sulfite (NADPH route): step 1/1. Functionally, component of the sulfite reductase complex that catalyzes the 6-electron reduction of sulfite to sulfide. This is one of several activities required for the biosynthesis of L-cysteine from sulfate. This is Sulfite reductase [NADPH] hemoprotein beta-component from Anoxybacillus flavithermus (strain DSM 21510 / WK1).